The sequence spans 145 residues: 3-hydroxyacyl-[acyl-carrier-protein] dehydratase FabZ (145 aa).

H48 is an active-site residue.

It belongs to the thioester dehydratase family. FabZ subfamily.

The protein localises to the cytoplasm. It carries out the reaction a (3R)-hydroxyacyl-[ACP] = a (2E)-enoyl-[ACP] + H2O. In terms of biological role, involved in unsaturated fatty acids biosynthesis. Catalyzes the dehydration of short chain beta-hydroxyacyl-ACPs and long chain saturated and unsaturated beta-hydroxyacyl-ACPs. This is 3-hydroxyacyl-[acyl-carrier-protein] dehydratase FabZ from Saccharophagus degradans (strain 2-40 / ATCC 43961 / DSM 17024).